A 161-amino-acid polypeptide reads, in one-letter code: Small ribosomal subunit protein uS9 (161 aa).

2 disordered regions span residues 1 to 28 and 142 to 161; these read MAQI…PKAP and KERK…FSKR.

It belongs to the universal ribosomal protein uS9 family.

The sequence is that of Small ribosomal subunit protein uS9 from Clavibacter sepedonicus (Clavibacter michiganensis subsp. sepedonicus).